Reading from the N-terminus, the 308-residue chain is Tyrosine recombinase XerC (308 aa).

The Core-binding (CB) domain occupies 20-101 (SKLHTLIDDF…SVKAFSSWAQ (82 aa)). The Tyr recombinase domain maps to 122–302 (DLPKILGEQQ…SNKRLLEAFN (181 aa)). Active-site residues include Arg-163, Lys-187, His-254, Arg-257, and His-280. The active-site O-(3'-phospho-DNA)-tyrosine intermediate is the Tyr-289.

This sequence belongs to the 'phage' integrase family. XerC subfamily. In terms of assembly, forms a cyclic heterotetrameric complex composed of two molecules of XerC and two molecules of XerD.

It is found in the cytoplasm. Its function is as follows. Site-specific tyrosine recombinase, which acts by catalyzing the cutting and rejoining of the recombining DNA molecules. The XerC-XerD complex is essential to convert dimers of the bacterial chromosome into monomers to permit their segregation at cell division. It also contributes to the segregational stability of plasmids. This is Tyrosine recombinase XerC from Corynebacterium glutamicum (strain ATCC 13032 / DSM 20300 / JCM 1318 / BCRC 11384 / CCUG 27702 / LMG 3730 / NBRC 12168 / NCIMB 10025 / NRRL B-2784 / 534).